The primary structure comprises 379 residues: MPLSRSLLSRRISNSFRFHQGETTTAPESESIPPPSNMAGSSSWSAMLPELLGEIIRRVEETEDRWPQRRDVVTCACVSKKWREITHDFARSSLNSGKITFPSCLKLPGPRDFSNQCLIKRNKKTSTFYLYLALTPSFTDKGKFLLAARRFRTGAYTEYIISLDADDFSQGSNAYVGKLRSDFLGTNFTVYDSQPPHNGAKPSNGKASRRFASKQISPQVPAGNFEVGHVSYKFNLLKSRGPRRMVSTLRCPSPSPSSSSAGLSSDQKPCDVTKIMKKPNKDGSSLTILKNKAPRWHEHLQCWCLNFHGRVTVASVKNFQLVATVDQSQPSGKGDEETVLLQFGKVGDDTFTMDYRQPLSAFQAFAICLTSFGTKLACE.

The span at 18-28 (FHQGETTTAPE) shows a compositional bias: polar residues. A disordered region spans residues 18–41 (FHQGETTTAPESESIPPPSNMAGS). In terms of domain architecture, F-box spans 42–97 (SSWSAMLPELLGEIIRRVEETEDRWPQRRDVVTCACVSKKWREITHDFARSSLNSG). Disordered stretches follow at residues 193–212 (SQPP…RRFA) and 248–278 (TLRC…IMKK).

Belongs to the TUB family. In terms of tissue distribution, ubiquitous.

The chain is Tubby-like F-box protein 7 from Arabidopsis thaliana (Mouse-ear cress).